A 603-amino-acid chain; its full sequence is Methionine--tRNA ligase (603 aa).

Positions proline 14–histidine 24 match the 'HIGH' region motif. Zn(2+) is bound by residues cysteine 146, cysteine 149, cysteine 159, and cysteine 162. Positions lysine 354–serine 358 match the 'KMSKS' region motif. Serine 357 lines the ATP pocket.

It belongs to the class-I aminoacyl-tRNA synthetase family. MetG type 1 subfamily. As to quaternary structure, monomer. Zn(2+) is required as a cofactor.

It localises to the cytoplasm. The catalysed reaction is tRNA(Met) + L-methionine + ATP = L-methionyl-tRNA(Met) + AMP + diphosphate. Functionally, is required not only for elongation of protein synthesis but also for the initiation of all mRNA translation through initiator tRNA(fMet) aminoacylation. This Salinispora tropica (strain ATCC BAA-916 / DSM 44818 / JCM 13857 / NBRC 105044 / CNB-440) protein is Methionine--tRNA ligase.